We begin with the raw amino-acid sequence, 2282 residues long: Protein Ycf2 (2282 aa).

1637-1644 (GSIGTGRS) serves as a coordination point for ATP.

Belongs to the Ycf2 family.

The protein localises to the plastid. Its subcellular location is the chloroplast stroma. In terms of biological role, probable ATPase of unknown function. Its presence in a non-photosynthetic plant (Epifagus virginiana) and experiments in tobacco indicate that it has an essential function which is probably not related to photosynthesis. This chain is Protein Ycf2, found in Citrus sinensis (Sweet orange).